We begin with the raw amino-acid sequence, 630 residues long: Succinate dehydrogenase [ubiquinone] flavoprotein subunit, mitochondrial (630 aa).

The N-terminal 31 residues, M1–L31, are a transit peptide targeting the mitochondrion. FAD contacts are provided by residues G52–G57, T75–G90, and D260. H83 is subject to Tele-8alpha-FAD histidine. 2 residues coordinate substrate: H281 and T293. R325 acts as the Proton acceptor in catalysis. Residue H392 coordinates substrate. E426 contacts FAD. R437 provides a ligand contact to substrate. S442–L443 lines the FAD pocket.

Belongs to the FAD-dependent oxidoreductase 2 family. FRD/SDH subfamily. Component of complex II composed of eight subunits in plants: four classical SDH subunits SDH1, SDH2, SDH3 and SDH4 (a flavoprotein (FP), an iron-sulfur protein (IP), and a cytochrome b composed of a large and a small subunit.), as well as four subunits unknown in mitochondria from bacteria and heterotrophic eukaryotes. It depends on FAD as a cofactor.

Its subcellular location is the mitochondrion inner membrane. The catalysed reaction is a quinone + succinate = fumarate + a quinol. It functions in the pathway carbohydrate metabolism; tricarboxylic acid cycle; fumarate from succinate (eukaryal route): step 1/1. Functionally, flavoprotein (FP) subunit of succinate dehydrogenase (SDH) that is involved in complex II of the mitochondrial electron transport chain and is responsible for transferring electrons from succinate to ubiquinone (coenzyme Q). The protein is Succinate dehydrogenase [ubiquinone] flavoprotein subunit, mitochondrial (SDH1) of Oryza sativa subsp. japonica (Rice).